Here is a 192-residue protein sequence, read N- to C-terminus: Fe/S biogenesis protein NfuA (192 aa).

Residues cysteine 149 and cysteine 152 each coordinate [4Fe-4S] cluster.

This sequence belongs to the NfuA family. Homodimer. Requires [4Fe-4S] cluster as cofactor.

Its function is as follows. Involved in iron-sulfur cluster biogenesis. Binds a 4Fe-4S cluster, can transfer this cluster to apoproteins, and thereby intervenes in the maturation of Fe/S proteins. Could also act as a scaffold/chaperone for damaged Fe/S proteins. This chain is Fe/S biogenesis protein NfuA, found in Idiomarina loihiensis (strain ATCC BAA-735 / DSM 15497 / L2-TR).